The primary structure comprises 348 residues: Phosphate acyltransferase (348 aa).

It belongs to the PlsX family. As to quaternary structure, homodimer. Probably interacts with PlsY.

The protein resides in the cytoplasm. The enzyme catalyses a fatty acyl-[ACP] + phosphate = an acyl phosphate + holo-[ACP]. Its pathway is lipid metabolism; phospholipid metabolism. Catalyzes the reversible formation of acyl-phosphate (acyl-PO(4)) from acyl-[acyl-carrier-protein] (acyl-ACP). This enzyme utilizes acyl-ACP as fatty acyl donor, but not acyl-CoA. The chain is Phosphate acyltransferase from Rhizobium rhizogenes (strain K84 / ATCC BAA-868) (Agrobacterium radiobacter).